The primary structure comprises 249 residues: Ribosomal RNA small subunit methyltransferase J (249 aa).

Residue Asp169 participates in S-adenosyl-L-methionine binding.

It belongs to the methyltransferase superfamily. RsmJ family.

The protein resides in the cytoplasm. The catalysed reaction is guanosine(1516) in 16S rRNA + S-adenosyl-L-methionine = N(2)-methylguanosine(1516) in 16S rRNA + S-adenosyl-L-homocysteine + H(+). Functionally, specifically methylates the guanosine in position 1516 of 16S rRNA. This Buchnera aphidicola subsp. Schizaphis graminum (strain Sg) protein is Ribosomal RNA small subunit methyltransferase J.